A 1332-amino-acid polypeptide reads, in one-letter code: Delta-poly-L-ornithine synthetase (1332 aa).

Residues Asp217, Glu221, and Thr304 each contribute to the L-ornithine site. Glu221, Thr304, Gly306, and Thr308 together coordinate D-ornithine. Positions 312 and 313 each coordinate L-ornithine. Ser313 contributes to the D-ornithine binding site. One can recognise a Carrier domain in the interval 524–601; it reads QPQNPAEEIL…AIAALMLEQP (78 aa). The residue at position 560 (Ser560) is an O-(pantetheine 4'-phosphoryl)serine. The next 6 membrane-spanning stretches (helical) occupy residues 629–649, 664–684, 868–888, 908–928, 1120–1140, and 1151–1171; these read LVTI…PFFT, AIAL…VLSI, VSAL…FLLV, LYYF…TAVI, IVLP…DVID, and LVAL…IVAL.

This sequence belongs to the ATP-dependent AMP-binding enzyme family. It depends on pantetheine 4'-phosphate as a cofactor.

The protein resides in the cell membrane. It carries out the reaction n L-ornithine + n ATP + H2O = N(5)-(L-ornithyl)-[N(5)-(L-ornithyl)]n-1 + n AMP + n diphosphate + n H(+). The enzyme catalyses n D-ornithine + n ATP + H2O = N(5)-(D-ornithyl)-[N(5)-(D-ornithyl)]n-1 + n AMP + n diphosphate + n H(+). Its function is as follows. Catalyzes the polymerization of L-ornithine, generating poly-L-ornithine composed of 7-12 amino acid units joined via isopeptide bonds between the carboxylate and the side chain amine. This polymer exhibits potent antifungal activity and thus may have a potential role in survival benefit for A.baumannii. The reaction occurs via ATP-dependent adenylation of the substrate. Can also adenylate D-ornithine with similar efficiency and thus may produce D-ornithine polymers. The chain is Delta-poly-L-ornithine synthetase from Acinetobacter baumannii (strain AB307-0294).